The sequence spans 579 residues: Glutamine--tRNA ligase (579 aa).

The short motif at 41-51 (PEPNGYLHIGH) is the 'HIGH' region element. ATP is bound by residues 42–44 (EPN) and 48–54 (HIGHAKA). D74 and Y218 together coordinate L-glutamine. ATP contacts are provided by residues T237, 285 to 286 (RL), and 293 to 295 (MSK). A 'KMSKS' region motif is present at residues 292–296 (VMSKR).

This sequence belongs to the class-I aminoacyl-tRNA synthetase family. Monomer.

It is found in the cytoplasm. It carries out the reaction tRNA(Gln) + L-glutamine + ATP = L-glutaminyl-tRNA(Gln) + AMP + diphosphate. The protein is Glutamine--tRNA ligase of Xanthomonas axonopodis pv. citri (strain 306).